A 282-amino-acid chain; its full sequence is 4-diphosphocytidyl-2-C-methyl-D-erythritol kinase (282 aa).

Residue Lys11 is part of the active site. 93–103 (LVSAGLAGGSA) provides a ligand contact to ATP. Residue Asp133 is part of the active site.

It belongs to the GHMP kinase family. IspE subfamily.

It carries out the reaction 4-CDP-2-C-methyl-D-erythritol + ATP = 4-CDP-2-C-methyl-D-erythritol 2-phosphate + ADP + H(+). It functions in the pathway isoprenoid biosynthesis; isopentenyl diphosphate biosynthesis via DXP pathway; isopentenyl diphosphate from 1-deoxy-D-xylulose 5-phosphate: step 3/6. Catalyzes the phosphorylation of the position 2 hydroxy group of 4-diphosphocytidyl-2C-methyl-D-erythritol. This chain is 4-diphosphocytidyl-2-C-methyl-D-erythritol kinase, found in Ehrlichia chaffeensis (strain ATCC CRL-10679 / Arkansas).